The chain runs to 148 residues: Flagellar assembly factor FliW (148 aa).

This sequence belongs to the FliW family. Interacts with translational regulator CsrA and flagellin(s).

The protein resides in the cytoplasm. Acts as an anti-CsrA protein, binds CsrA and prevents it from repressing translation of its target genes, one of which is flagellin. Binds to flagellin and participates in the assembly of the flagellum. This is Flagellar assembly factor FliW from Ruminiclostridium cellulolyticum (strain ATCC 35319 / DSM 5812 / JCM 6584 / H10) (Clostridium cellulolyticum).